The chain runs to 439 residues: Mitochondrial distribution and morphology protein 12 (439 aa).

Residues 1–439 enclose the SMP-LTD domain; the sequence is MSIDINWEAA…VYPSFWTFLV (439 aa). The segment covering 71–84 has biased composition (acidic residues); it reads EEDEGDEDFSDDQD. Disordered regions lie at residues 71–104, 182–278, and 362–385; these read EEDEGDEDFSDDQDGAPKHPPTIATERSGAGTWQ, TPLA…HEKK, and YIPGINPIGGGASGGAASSRRRDD. Basic and acidic residues predominate over residues 212–229; it reads DYPRPVHRQTDTDIDSGH. Residues 230–255 are compositionally biased toward polar residues; that stretch reads SRPSTADTLNSINSQRISNPALSHPH. Positions 256–269 are enriched in basic and acidic residues; that stretch reads SSNESHPDTRDHSP.

Belongs to the MDM12 family. As to quaternary structure, component of the ER-mitochondria encounter structure (ERMES) or MDM complex, composed of MMM1, MDM10, MDM12 and MDM34. An MMM1 homodimer associates with one molecule of MDM12 on each side in a pairwise head-to-tail manner, and the SMP-LTD domains of MMM1 and MDM12 generate a continuous hydrophobic tunnel for phospholipid trafficking.

It is found in the mitochondrion outer membrane. The protein localises to the endoplasmic reticulum membrane. Component of the ERMES/MDM complex, which serves as a molecular tether to connect the endoplasmic reticulum (ER) and mitochondria. Components of this complex are involved in the control of mitochondrial shape and protein biogenesis, and function in nonvesicular lipid trafficking between the ER and mitochondria. MDM12 is required for the interaction of the ER-resident membrane protein MMM1 and the outer mitochondrial membrane-resident beta-barrel protein MDM10. The MDM12-MMM1 subcomplex functions in the major beta-barrel assembly pathway that is responsible for biogenesis of all mitochondrial outer membrane beta-barrel proteins, and acts in a late step after the SAM complex. The MDM10-MDM12-MMM1 subcomplex further acts in the TOM40-specific pathway after the action of the MDM12-MMM1 complex. Essential for establishing and maintaining the structure of mitochondria and maintenance of mtDNA nucleoids. The protein is Mitochondrial distribution and morphology protein 12 of Uncinocarpus reesii (strain UAMH 1704).